Reading from the N-terminus, the 150-residue chain is 3-hydroxyacyl-[acyl-carrier-protein] dehydratase FabZ (150 aa).

His54 is an active-site residue.

Belongs to the thioester dehydratase family. FabZ subfamily.

Its subcellular location is the cytoplasm. The catalysed reaction is a (3R)-hydroxyacyl-[ACP] = a (2E)-enoyl-[ACP] + H2O. Its function is as follows. Involved in unsaturated fatty acids biosynthesis. Catalyzes the dehydration of short chain beta-hydroxyacyl-ACPs and long chain saturated and unsaturated beta-hydroxyacyl-ACPs. The chain is 3-hydroxyacyl-[acyl-carrier-protein] dehydratase FabZ from Chromobacterium violaceum (strain ATCC 12472 / DSM 30191 / JCM 1249 / CCUG 213 / NBRC 12614 / NCIMB 9131 / NCTC 9757 / MK).